A 97-amino-acid polypeptide reads, in one-letter code: Large ribosomal subunit protein bL28 (97 aa).

It belongs to the bacterial ribosomal protein bL28 family.

The protein is Large ribosomal subunit protein bL28 of Rickettsia canadensis (strain McKiel).